We begin with the raw amino-acid sequence, 382 residues long: Porin-like protein BU359 (382 aa).

Positions 1 to 23 (MTNRKSLAMVIPMLLAASNGVNA) are cleaved as a signal peptide.

This sequence belongs to the Gram-negative porin family. Homotrimer.

It is found in the cell outer membrane. Functionally, forms pores that allow passive diffusion of small molecules across the membrane. The chain is Porin-like protein BU359 from Buchnera aphidicola subsp. Acyrthosiphon pisum (strain APS) (Acyrthosiphon pisum symbiotic bacterium).